The chain runs to 892 residues: Alpha-actinin-1 (892 aa).

Met1 carries the post-translational modification N-acetylmethionine. An actin-binding region spans residues 1–247 (MDHYDSQQTN…IMTYVSSFYH (247 aa)). Ser6 bears the Phosphoserine mark. Tyr12 carries the phosphotyrosine; by FAK1 modification. 2 Calponin-homology (CH) domains span residues 31 to 135 (KQQR…LRFA) and 144 to 250 (TSAK…HAFS). An N6-acetyllysine mark is found at Lys95 and Lys195. Spectrin repeat units lie at residues 274–384 (QLME…WLLN), 394–499 (HLAE…ALER), 509–620 (QLYL…ALTE), and 630–733 (RLRK…EVEN). The interaction with DDN stretch occupies residues 274-733 (QLMEDYEKLA…IARTINEVEN (460 aa)). At Ser471 the chain carries Phosphoserine. Lys676 carries the post-translational modification N6-acetyllysine. Position 677 is a phosphoserine (Ser677). EF-hand domains lie at 746-781 (EQMN…LGYD) and 787-822 (QGEA…ETAD). 5 residues coordinate Ca(2+): Asp759, Asp761, Ser763, Thr765, and Glu770. Phosphoserine is present on Ser890.

It belongs to the alpha-actinin family. In terms of assembly, homodimer; antiparallel. Interacts with MYOZ2, TTID and LPP. Interacts with DDN. Interacts with PSD. Interacts with MICALL2. Interacts with DNM2 and CTTN. Interacts with PDLIM1. Interacts with PDLIM2. Interacts with PDLIM4 (via PDZ domain). Interacts with IGSF8.

The protein localises to the cytoplasm. The protein resides in the cytoskeleton. It localises to the myofibril. Its subcellular location is the sarcomere. It is found in the z line. The protein localises to the cell membrane. The protein resides in the cell junction. It localises to the cell projection. Its subcellular location is the ruffle. Functionally, F-actin cross-linking protein which is thought to anchor actin to a variety of intracellular structures. Association with IGSF8 regulates the immune synapse formation and is required for efficient T-cell activation. The polypeptide is Alpha-actinin-1 (Actn1) (Rattus norvegicus (Rat)).